Consider the following 1487-residue polypeptide: Protein cft1 (1487 aa).

Acidic residues predominate over residues 486-504; the sequence is DLDLDDEDLEDDDDDDLYG. The tract at residues 486-513 is disordered; that stretch reads DLDLDDEDLEDDDDDDLYGEESASPEQA.

The protein belongs to the CFT1 family.

The protein localises to the nucleus. Functionally, RNA-binding component of the cleavage and polyadenylation factor (CPF) complex, which plays a key role in polyadenylation-dependent pre-mRNA 3'-end formation and cooperates with cleavage factors including the CFIA complex and hrp1/CFIB. Involved in poly(A) site recognition. May be involved in coupling transcription termination and mRNA 3'-end formation. The protein is Protein cft1 (paa-3) of Neurospora crassa (strain ATCC 24698 / 74-OR23-1A / CBS 708.71 / DSM 1257 / FGSC 987).